Reading from the N-terminus, the 283-residue chain is Para-Rep C7 (283 aa).

The region spanning 3-96 (SIRATHWCFT…IAGPWEYGTW (94 aa)) is the CRESS-DNA virus Rep endonuclease domain. An RCR-1 motif is present at residues 10-13 (CFTL). Residues Glu-36 and His-42 each contribute to the a divalent metal cation site. The short motif at 42–44 (HLQ) is the RCR-2 element. Positions 51–71 (KHVTLKKMKELLPGAHLEMAK) match the Nuclear localization signal motif. Residue Tyr-79 is the For DNA cleavage activity of the active site. The short motif at 79-82 (YCQK) is the RCR-3 element. Glu-84 provides a ligand contact to a divalent metal cation. The Nuclear localization signal motif lies at 96 to 102 (WISSGSH). 178–180 (GKS) serves as a coordination point for ATP.

Belongs to the nanoviridea/circoviridae replication-associated protein family. As to quaternary structure, homooligomer (Potential). Rep binds to repeated DNA motifs (iterons). It depends on Mg(2+) as a cofactor. Requires Mn(2+) as cofactor.

It is found in the host nucleus. The catalysed reaction is ATP + H2O = ADP + phosphate + H(+). Functionally, initiates and terminates the replication only of its own subviral DNA molecule. The closed circular ssDNA genome is first converted to a superhelical dsDNA. Rep binds a specific hairpin at the genome origin of replication. Introduces an endonucleolytic nick within the intergenic region of the genome, thereby initiating the rolling circle replication (RCR). Following cleavage, binds covalently to the 5'-phosphate of DNA as a tyrosyl ester. The cleavage gives rise to a free 3'-OH that serves as a primer for the cellular DNA polymerase. The polymerase synthesizes the (+) strand DNA by rolling circle mechanism. After one round of replication, a Rep-catalyzed nucleotidyl transfer reaction releases a circular single-stranded virus genome, thereby terminating the replication. Displays origin-specific DNA cleavage, nucleotidyl transferase, ATPase and helicase activities. The sequence is that of Para-Rep C7 (C7) from Faba bean necrotic yellows C7 alphasatellite (FBNYC7A).